The chain runs to 178 residues: Methyltransferase flvH (178 aa).

Residues 120-136 enclose the Post-SET domain; the sequence is QPFNCFCGSQNCLGLIA. Cys-124, Cys-126, and Cys-131 together coordinate Zn(2+).

The protein belongs to the class V-like SAM-binding methyltransferase superfamily.

It catalyses the reaction L-lysine + 2 S-adenosyl-L-methionine = N(6),N(6)-dimethyl-L-lysine + 2 S-adenosyl-L-homocysteine + 2 H(+). It participates in secondary metabolite biosynthesis; terpenoid biosynthesis. Methyltransferase; part of the gene cluster that mediates the biosynthesis of flavunoidine, an alkaloidal terpenoid with a tetracyclic cage-like core connected to dimethylcadaverine via a C-N bond and acylated with 5,5-dimethyl-L-pipecolate. The tetracyclic core is synthesized by the terpene cyclase flvE and the cytochrome P450 monooxygenase flvD. The terpene cyclase flvE catalyzes the cyclization of farnesyl pyrophosphate (FPP) to form (1R,4R,5S)-(+)-acoradiene and the cytochrome P450 monooxygenase flvD is then responsible for oxidative conversion of (1R,4R,5S)-(+)-acoradiene into the tetracyclic cage present in the final product flavunoidine. In parallel, the N-methyltransferase flvH dimethylates L-lysine to give N,N-dimethyl-L-Lysin which is decarboxylated by flvG to afford dimethylcadaverine. The terpene cyclase-like protein flvF is the enzyme that attaches the dimethylcadaverine precusor at the C-7 of the tetracyclic cage to yield pre-flavunoidine. The cytochrome monooxygenase flvC hydroxylates the C-10 position of pre-flavunoidine whereas the NRPS flvI acylates the terpenoid core at the hydroxylated C-10 with dimethylpipecolate to yield final flavunoidine. The bifunctional enzyme flvA and the dehydrogenase flvB are responsible for the synthesis of the dimethylpipecolate precursor. The PLP-dependent lyase domain of flvA might use L-O-acetyl-homoserine and alpha-keto-isovalerate to form an intermediary ketone that can cyclize intramolecularly to yield an imine. The imine can be reduced by flvB to yield the 6-carboxylated pipecolate. The C-terminal alpha-KG-dependent oxygenase domain of flvA is then proposed to catalyze the decarboxylation to yield dimethylpipecolate. In Aspergillus flavus (strain ATCC 200026 / FGSC A1120 / IAM 13836 / NRRL 3357 / JCM 12722 / SRRC 167), this protein is Methyltransferase flvH.